A 217-amino-acid chain; its full sequence is Large ribosomal subunit protein uL3 (217 aa).

This sequence belongs to the universal ribosomal protein uL3 family. Part of the 50S ribosomal subunit. Forms a cluster with proteins L14 and L19.

Functionally, one of the primary rRNA binding proteins, it binds directly near the 3'-end of the 23S rRNA, where it nucleates assembly of the 50S subunit. The sequence is that of Large ribosomal subunit protein uL3 from Mycolicibacterium paratuberculosis (strain ATCC BAA-968 / K-10) (Mycobacterium paratuberculosis).